The following is a 132-amino-acid chain: Small ribosomal subunit protein uS8 (132 aa).

It belongs to the universal ribosomal protein uS8 family. Part of the 30S ribosomal subunit. Contacts proteins S5 and S12.

Functionally, one of the primary rRNA binding proteins, it binds directly to 16S rRNA central domain where it helps coordinate assembly of the platform of the 30S subunit. The polypeptide is Small ribosomal subunit protein uS8 (Mycoplasmopsis synoviae (strain 53) (Mycoplasma synoviae)).